Reading from the N-terminus, the 879-residue chain is Levansucrase (879 aa).

Positions 1-37 are cleaved as a signal peptide; that stretch reads MTKEHKKMYKAGKYWAVATLVSASILMEVGVTTHADA. 7 repeat units span residues 66-81, 82-97, 98-113, 114-129, 130-145, 146-161, and 162-177. The segment at 66–177 is 7 X 16 AA tandem repeats of D-N-A-T-S-G-S-T-K-Q-E-S-S-[IV]-A-N; that stretch reads DNATSGSTKQ…STKQESSVAN (112 aa). Polar residues-rich tracts occupy residues 66–180 and 189–213; these read DNAT…NDTK and NTSN…AATQ. Residues 66 to 213 are disordered; it reads DNATSGSTKQ…NNEQPSAATQ (148 aa). Sucrose contacts are provided by tryptophan 311, aspartate 312, and serine 382. Aspartate 312 (nucleophile) is an active-site residue. Aspartate 460 is a binding site for Ca(2+). 2 residues coordinate sucrose: arginine 465 and aspartate 466. 4 residues coordinate Ca(2+): glutamine 491, leucine 528, asparagine 530, and aspartate 562. Residue glutamate 563 coordinates sucrose. Glutamate 565 functions as the Proton donor/acceptor in the catalytic mechanism. Residue arginine 583 coordinates sucrose. The tract at residues 743–830 is disordered; sequence SSGLGLKPHQ…TPAKPVQAGQ (88 aa). Residues 754–821 are compositionally biased toward polar residues; it reads VNPSQPTTPA…KPVNPSQPTT (68 aa). The short motif at 841–845 is the LPXTG sorting signal element; that stretch reads LPQTG. Threonine 844 carries the post-translational modification Pentaglycyl murein peptidoglycan amidated threonine. Residues 845-879 constitute a propeptide, removed by sortase; the sequence is GENNSQSQTMSFIGILLAMFGSLLGFLGIKKRRND.

This sequence belongs to the glycosyl hydrolase 68 family.

It is found in the secreted. The protein localises to the cell wall. The enzyme catalyses [6)-beta-D-fructofuranosyl-(2-&gt;](n) alpha-D-glucopyranoside + sucrose = [6)-beta-D-fructofuranosyl-(2-&gt;](n+1) alpha-D-glucopyranoside + D-glucose. Its activity is regulated as follows. Ca(2+) may play an important structural role and promote stability of levansucrase. Its function is as follows. Fructosyltransferase that catalyzes the polymerization of the fructose moiety of sucrose to produce levan polymer and the fructo-oligosaccharide (FOS) 1-kestose. Also displays sucrose hydrolase activity. This is Levansucrase from Fructilactobacillus sanfranciscensis (Lactobacillus sanfranciscensis).